Here is a 325-residue protein sequence, read N- to C-terminus: Release factor glutamine methyltransferase (325 aa).

Residues 141 to 145, aspartate 164, tryptophan 193, and asparagine 207 contribute to the S-adenosyl-L-methionine site; that span reads GTGSG. 207 to 210 contacts substrate; it reads NPPY. Positions 306 to 325 are disordered; sequence LPPIHIDAKPSAPGNGPTKA.

Belongs to the protein N5-glutamine methyltransferase family. PrmC subfamily.

It catalyses the reaction L-glutaminyl-[peptide chain release factor] + S-adenosyl-L-methionine = N(5)-methyl-L-glutaminyl-[peptide chain release factor] + S-adenosyl-L-homocysteine + H(+). In terms of biological role, methylates the class 1 translation termination release factors RF1/PrfA and RF2/PrfB on the glutamine residue of the universally conserved GGQ motif. This Rhodospirillum rubrum (strain ATCC 11170 / ATH 1.1.1 / DSM 467 / LMG 4362 / NCIMB 8255 / S1) protein is Release factor glutamine methyltransferase.